We begin with the raw amino-acid sequence, 301 residues long: Ribonuclease H2 subunit A (301 aa).

N-acetylmethionine is present on M1. Residues 28-251 (PCVLGVDEAG…AQAILEKEAE (224 aa)) form the RNase H type-2 domain. D34, E35, and D142 together coordinate a divalent metal cation. T217 carries the post-translational modification Phosphothreonine. The span at 255 to 264 (WEDSEAEEDP) shows a compositional bias: acidic residues. Residues 255–284 (WEDSEAEEDPERPGKITSYFSQGPQTCRPQ) form a disordered region. S258 is modified (phosphoserine). Residues 272 to 282 (SYFSQGPQTCR) show a composition bias toward polar residues.

The protein belongs to the RNase HII family. Eukaryotic subfamily. The RNase H2 complex is a heterotrimer composed of the catalytic subunit RNASEH2A and the non-catalytic subunits RNASEH2B and RNASEH2C. Mn(2+) is required as a cofactor. Requires Mg(2+) as cofactor.

Its subcellular location is the nucleus. The catalysed reaction is Endonucleolytic cleavage to 5'-phosphomonoester.. In terms of biological role, catalytic subunit of RNase HII, an endonuclease that specifically degrades the RNA of RNA:DNA hybrids. Participates in DNA replication, possibly by mediating the removal of lagging-strand Okazaki fragment RNA primers during DNA replication. Mediates the excision of single ribonucleotides from DNA:RNA duplexes. The chain is Ribonuclease H2 subunit A (Rnaseh2a) from Mus musculus (Mouse).